The following is a 103-amino-acid chain: N(4)-acetylcytidine amidohydrolase (103 aa).

Residues 6–100 (ITFFQRFQED…AEDRFYVIEF (95 aa)) enclose the ASCH domain. Lysine 21 serves as the catalytic Proton acceptor. Threonine 24 (nucleophile) is an active-site residue. The active-site Proton donor is glutamate 74.

It belongs to the N(4)-acetylcytidine amidohydrolase family.

It catalyses the reaction N(4)-acetylcytidine + H2O = cytidine + acetate + H(+). The enzyme catalyses N(4)-acetyl-2'-deoxycytidine + H2O = 2'-deoxycytidine + acetate + H(+). The catalysed reaction is N(4)-acetylcytosine + H2O = cytosine + acetate + H(+). Functionally, catalyzes the hydrolysis of N(4)-acetylcytidine (ac4C). The sequence is that of N(4)-acetylcytidine amidohydrolase from Klebsiella pneumoniae (strain 342).